Consider the following 471-residue polypeptide: Sulfate adenylyltransferase subunit 1 (471 aa).

A tr-type G domain is found at 22–239 (KDMLRFLTCG…NIEIGEDDNL (218 aa)). Positions 31–38 (GSVDDGKS) are G1. GTP is bound at residue 31 to 38 (GSVDDGKS). Residues 89–93 (GITID) are G2. Positions 110 to 113 (DTPG) are G3. Residues 110-114 (DTPGH) and 165-168 (NKMD) contribute to the GTP site. The G4 stretch occupies residues 165–168 (NKMD). Residues 202–204 (SAL) form a G5 region.

The protein belongs to the TRAFAC class translation factor GTPase superfamily. Classic translation factor GTPase family. CysN/NodQ subfamily. In terms of assembly, heterodimer composed of CysD, the smaller subunit, and CysN.

The catalysed reaction is sulfate + ATP + H(+) = adenosine 5'-phosphosulfate + diphosphate. Its pathway is sulfur metabolism; hydrogen sulfide biosynthesis; sulfite from sulfate: step 1/3. Functionally, with CysD forms the ATP sulfurylase (ATPS) that catalyzes the adenylation of sulfate producing adenosine 5'-phosphosulfate (APS) and diphosphate, the first enzymatic step in sulfur assimilation pathway. APS synthesis involves the formation of a high-energy phosphoric-sulfuric acid anhydride bond driven by GTP hydrolysis by CysN coupled to ATP hydrolysis by CysD. This chain is Sulfate adenylyltransferase subunit 1, found in Alteromonas mediterranea (strain DSM 17117 / CIP 110805 / LMG 28347 / Deep ecotype).